The primary structure comprises 634 residues: DNA-directed RNA polymerase subunit gamma (634 aa).

Positions 74, 76, 89, and 92 each coordinate Zn(2+). Mg(2+) is bound by residues Asp-471, Asp-473, and Asp-475.

Belongs to the RNA polymerase beta' chain family. RpoC1 subfamily. In terms of assembly, in cyanobacteria the RNAP catalytic core is composed of 2 alpha, 1 beta, 1 beta', 1 gamma and 1 omega subunit. When a sigma factor is associated with the core the holoenzyme is formed, which can initiate transcription. The cofactor is Mg(2+). Requires Zn(2+) as cofactor.

The enzyme catalyses RNA(n) + a ribonucleoside 5'-triphosphate = RNA(n+1) + diphosphate. Functionally, DNA-dependent RNA polymerase catalyzes the transcription of DNA into RNA using the four ribonucleoside triphosphates as substrates. This is DNA-directed RNA polymerase subunit gamma from Prochlorococcus marinus (strain MIT 9303).